A 261-amino-acid polypeptide reads, in one-letter code: 5'-nucleotidase SurE (261 aa).

Residues D18, D19, S50, and N102 each contribute to the a divalent metal cation site.

This sequence belongs to the SurE nucleotidase family. The cofactor is a divalent metal cation.

It is found in the cytoplasm. It carries out the reaction a ribonucleoside 5'-phosphate + H2O = a ribonucleoside + phosphate. Its function is as follows. Nucleotidase that shows phosphatase activity on nucleoside 5'-monophosphates. In Rhodospirillum rubrum (strain ATCC 11170 / ATH 1.1.1 / DSM 467 / LMG 4362 / NCIMB 8255 / S1), this protein is 5'-nucleotidase SurE.